A 255-amino-acid polypeptide reads, in one-letter code: 4-hydroxy-tetrahydrodipicolinate reductase (255 aa).

NAD(+)-binding positions include 9–14 (GFKGKM), Asp-35, 89–91 (GTT), and 115–118 (APNF). The active-site Proton donor/acceptor is the His-145. His-146 is a (S)-2,3,4,5-tetrahydrodipicolinate binding site. Lys-149 acts as the Proton donor in catalysis. 155–156 (GT) is a (S)-2,3,4,5-tetrahydrodipicolinate binding site.

This sequence belongs to the DapB family.

The protein resides in the cytoplasm. The enzyme catalyses (S)-2,3,4,5-tetrahydrodipicolinate + NAD(+) + H2O = (2S,4S)-4-hydroxy-2,3,4,5-tetrahydrodipicolinate + NADH + H(+). It carries out the reaction (S)-2,3,4,5-tetrahydrodipicolinate + NADP(+) + H2O = (2S,4S)-4-hydroxy-2,3,4,5-tetrahydrodipicolinate + NADPH + H(+). The protein operates within amino-acid biosynthesis; L-lysine biosynthesis via DAP pathway; (S)-tetrahydrodipicolinate from L-aspartate: step 4/4. Catalyzes the conversion of 4-hydroxy-tetrahydrodipicolinate (HTPA) to tetrahydrodipicolinate. The chain is 4-hydroxy-tetrahydrodipicolinate reductase from Streptococcus pneumoniae serotype 19F (strain G54).